The following is a 258-amino-acid chain: Short-chain dehydrogenase/reductase aba4 (258 aa).

The NADP(+) site is built by I20, D66, and K130. Residues S146 and Y160 each act as proton donor in the active site. NADP(+) contacts are provided by Y160, K164, I193, and T195. Catalysis depends on K164, which acts as the Lowers pKa of active site Tyr.

The protein belongs to the short-chain dehydrogenases/reductases (SDR) family.

The protein operates within hormone biosynthesis. Its function is as follows. Short-chain dehydrogenase/reductase; part of the gene cluster that mediates the biosynthesis of abscisic acid (ABA), a phytohormone that acts antagonistically toward salicylic acid (SA), jasmonic acid (JA) and ethylene (ETH) signaling, to impede plant defense responses. The first step of the pathway catalyzes the reaction from farnesyl diphosphate to alpha-ionylideneethane performed by the alpha-ionylideneethane synthase aba3 via a three-step reaction mechanism involving 2 neutral intermediates, beta-farnesene and allofarnesene. The cytochrome P450 monooxygenase aba1 might then be involved in the conversion of alpha-ionylideneethane to alpha-ionylideneacetic acid. Alpha-ionylideneacetic acid is further converted to abscisic acid in 2 steps involving the cytochrome P450 monooxygenase aba2 and the short-chain dehydrogenase/reductase aba4, via the intermediates 1'-deoxy-ABA or 1',4'-trans-diol-ABA, depending on the order of action of these 2 enzymes. Aba2 is responsible for the hydroxylation of carbon atom C-1' and aba4 might be involved in the oxidation of the C-4' carbon atom. The sequence is that of Short-chain dehydrogenase/reductase aba4 from Botryotinia fuckeliana (strain B05.10) (Noble rot fungus).